A 120-amino-acid polypeptide reads, in one-letter code: Large ribosomal subunit protein uL18 (120 aa).

It belongs to the universal ribosomal protein uL18 family. In terms of assembly, part of the 50S ribosomal subunit; part of the 5S rRNA/L5/L18/L25 subcomplex. Contacts the 5S and 23S rRNAs.

This is one of the proteins that bind and probably mediate the attachment of the 5S RNA into the large ribosomal subunit, where it forms part of the central protuberance. The protein is Large ribosomal subunit protein uL18 of Exiguobacterium sp. (strain ATCC BAA-1283 / AT1b).